A 216-amino-acid polypeptide reads, in one-letter code: Protein-L-isoaspartate O-methyltransferase (216 aa).

The active site involves Ser60.

This sequence belongs to the methyltransferase superfamily. L-isoaspartyl/D-aspartyl protein methyltransferase family.

It localises to the cytoplasm. It catalyses the reaction [protein]-L-isoaspartate + S-adenosyl-L-methionine = [protein]-L-isoaspartate alpha-methyl ester + S-adenosyl-L-homocysteine. Functionally, catalyzes the methyl esterification of L-isoaspartyl residues in peptides and proteins that result from spontaneous decomposition of normal L-aspartyl and L-asparaginyl residues. It plays a role in the repair and/or degradation of damaged proteins. The polypeptide is Protein-L-isoaspartate O-methyltransferase (Methanococcus aeolicus (strain ATCC BAA-1280 / DSM 17508 / OCM 812 / Nankai-3)).